We begin with the raw amino-acid sequence, 443 residues long: Nitrate/nitrite binding protein NrtA (443 aa).

The N-terminal stretch at 1 to 25 is a signal peptide; the sequence is MSQFSRRKFLLTAGGTAAAALWLNA. Residue Cys26 is the site of N-palmitoyl cysteine attachment. The S-diacylglycerol cysteine moiety is linked to residue Cys26. Over residues 31 to 46 the composition is skewed to low complexity; the sequence is SSTDTTGSTSTPAPSG. The interval 31-52 is disordered; it reads SSTDTTGSTSTPAPSGTSGGDA. Residues Trp96, Gln150, His195, Gly239, and Lys268 each coordinate nitrate.

This sequence belongs to the CmpA/NrtA family. The complex is composed of two ATP-binding proteins (NrtC and NrtD), two transmembrane proteins (NrtB) and a solute-binding protein (NrtA). NrtA can form homotrimers. In terms of processing, the N-terminus is blocked.

The protein resides in the cell inner membrane. In terms of biological role, part of the ABC transporter complex NrtABCD involved in nitrate uptake. The complex is probably also involved in nitrite transport. NrtA is the substrate-binding protein. Binds both nitrate and nitrite with high affinity. The sequence is that of Nitrate/nitrite binding protein NrtA from Synechococcus elongatus (strain ATCC 33912 / PCC 7942 / FACHB-805) (Anacystis nidulans R2).